The primary structure comprises 366 residues: tRNA/tmRNA (uracil-C(5))-methyltransferase (366 aa).

Residues glutamine 190, tyrosine 218, asparagine 223, glutamate 239, and aspartate 299 each contribute to the S-adenosyl-L-methionine site. Cysteine 324 (nucleophile) is an active-site residue. The active-site Proton acceptor is the glutamate 358.

Belongs to the class I-like SAM-binding methyltransferase superfamily. RNA M5U methyltransferase family. TrmA subfamily.

The enzyme catalyses uridine(54) in tRNA + S-adenosyl-L-methionine = 5-methyluridine(54) in tRNA + S-adenosyl-L-homocysteine + H(+). It carries out the reaction uridine(341) in tmRNA + S-adenosyl-L-methionine = 5-methyluridine(341) in tmRNA + S-adenosyl-L-homocysteine + H(+). Its function is as follows. Dual-specificity methyltransferase that catalyzes the formation of 5-methyluridine at position 54 (m5U54) in all tRNAs, and that of position 341 (m5U341) in tmRNA (transfer-mRNA). In Salmonella typhi, this protein is tRNA/tmRNA (uracil-C(5))-methyltransferase.